We begin with the raw amino-acid sequence, 347 residues long: Protein RecA (347 aa).

66–73 (GPESSGKT) is an ATP binding site. Residues 328 to 347 (MPKPNAPKATDEALDETGTD) are disordered.

This sequence belongs to the RecA family.

The protein resides in the cytoplasm. Its function is as follows. Can catalyze the hydrolysis of ATP in the presence of single-stranded DNA, the ATP-dependent uptake of single-stranded DNA by duplex DNA, and the ATP-dependent hybridization of homologous single-stranded DNAs. It interacts with LexA causing its activation and leading to its autocatalytic cleavage. This Hydrogenovibrio crunogenus (strain DSM 25203 / XCL-2) (Thiomicrospira crunogena) protein is Protein RecA.